The sequence spans 430 residues: GPI mannosyltransferase 1 (430 aa).

At 1–11 (MELQSLIDTVS) the chain is on the cytoplasmic side. Residues 12 to 32 (LQKLLLLGALLRLILIAYAFF) traverse the membrane as a helical segment. The Lumenal segment spans residues 33–72 (HDQWFRVKYTDIDYMIVVDGARHMWNGGSPFDRTTFRYTP). Residues 73–93 (LLAALVMPSIWIANPMGKLIF) traverse the membrane as a helical segment. At 94–115 (ASSDLGAAWYCYGVLKSFAKER) the chain is on the cytoplasmic side. The chain crosses the membrane as a helical span at residues 116 to 136 (SAKWMVSLFILFNPIVLSVST). Over 137–163 (RGNSDMLVTFMSLMVLSKFARRKCYQA) the chain is Lumenal. Residues 164-184 (AAVLGFAVHFKIYPIIYALPL) traverse the membrane as a helical segment. Residues 185 to 206 (TLGVWEQSVAASTNTWRRVVKT) are Cytoplasmic-facing. The helical transmembrane segment at 207-227 (AVVVSICALMAAISFAVPTVL) threads the bilayer. The Lumenal segment spans residues 228-360 (CYMKYGQQYL…AFKFFSWVKA (133 aa)). Residues 361 to 381 (LGVVLMWAATIPLWVTTAVPL) traverse the membrane as a helical segment. The Cytoplasmic segment spans residues 382–388 (EFHGYSD). A helical transmembrane segment spans residues 389-409 (FAQLWIVSCLFFLAMVVLASM). Topologically, residues 410–430 (LARIAYRVQCTKCSAKSIKVA) are lumenal.

This sequence belongs to the PIGM family.

Its subcellular location is the endoplasmic reticulum membrane. It participates in glycolipid biosynthesis; glycosylphosphatidylinositol-anchor biosynthesis. Functionally, mannosyltransferase involved in glycosylphosphatidylinositol-anchor biosynthesis. Transfers the first alpha-1,4-mannose to GlcN-PI during GPI precursor assembly. This Trypanosoma brucei brucei (strain 927/4 GUTat10.1) protein is GPI mannosyltransferase 1 (PIGM).